The primary structure comprises 108 residues: ATPase inhibitor, mitochondrial (108 aa).

The N-terminal 25 residues, 1–25 (MAATALAVRSRIGAWSVWAMQSRGF), are a transit peptide targeting the mitochondrion. Residues 25–48 (FSSDTPEGVRSGAGAVRDAGGAFG) form a disordered region. Residues 26–52 (SSDTPEGVRSGAGAVRDAGGAFGKKEQ) form an N-terminal inhibitory region region. Residues 69–108 (ALKKHHENEISHHVKEIERLQKEIERHKQSIKKLKNDDDD) are a coiled coil. The interval 74 to 106 (HENEISHHVKEIERLQKEIERHKQSIKKLKNDD) is antiparallel alpha-helical coiled coil region. Lysine 103 bears the N6-succinyllysine mark.

It belongs to the ATPase inhibitor family. As to quaternary structure, homodimer; represents the active form and is present at a pH value below 6.5. Homotetramer; represents the inactive form and is present at a pH value above 7.0.

Its subcellular location is the mitochondrion. Its function is as follows. Endogenous F(1)F(o)-ATPase inhibitor limiting ATP depletion when the mitochondrial membrane potential falls below a threshold and the F(1)F(o)-ATP synthase starts hydrolyzing ATP to pump protons out of the mitochondrial matrix. Required to avoid the consumption of cellular ATP when the F(1)F(o)-ATP synthase enzyme acts as an ATP hydrolase. Indirectly acts as a regulator of heme synthesis in erythroid tissues: regulates heme synthesis by modulating the mitochondrial pH and redox potential, allowing FECH to efficiently catalyze the incorporation of iron into protoporphyrin IX to produce heme. The sequence is that of ATPase inhibitor, mitochondrial from Sus scrofa (Pig).